A 190-amino-acid chain; its full sequence is Transcription termination/antitermination protein NusG (190 aa).

The 25-residue stretch at 141–165 (GDMVRVTSGPFADFSGVVSEVNAPQ) folds into the KOW domain.

This sequence belongs to the NusG family.

In terms of biological role, participates in transcription elongation, termination and antitermination. This is Transcription termination/antitermination protein NusG from Deinococcus radiodurans (strain ATCC 13939 / DSM 20539 / JCM 16871 / CCUG 27074 / LMG 4051 / NBRC 15346 / NCIMB 9279 / VKM B-1422 / R1).